Reading from the N-terminus, the 588-residue chain is Arginine--tRNA ligase (588 aa).

Residues 124-134 (PNVAKPMHVGH) carry the 'HIGH' region motif.

The protein belongs to the class-I aminoacyl-tRNA synthetase family. As to quaternary structure, monomer.

The protein localises to the cytoplasm. The catalysed reaction is tRNA(Arg) + L-arginine + ATP = L-arginyl-tRNA(Arg) + AMP + diphosphate. The protein is Arginine--tRNA ligase of Maricaulis maris (strain MCS10) (Caulobacter maris).